The following is a 323-amino-acid chain: Leucine-rich repeat-containing protein 46 (323 aa).

4 LRR repeats span residues 49-70 (DLETVRLDGEGITCIGNLERLR), 71-92 (NIHSLYLQSNKIQRIENLACIT), 93-114 (SLRFLSLAGNQIRHVENLLDLQ), and 115-135 (YLQFLDLSENLIETLKLDELP). The LRRCT domain occupies 146–188 (NPCTNQDGYRKMVIGALPLLLDLDKQPILERWTSDEEDKSSDE). T178 is modified (phosphothreonine). A phosphoserine mark is found at S179, S185, and S186. Residues 203 to 228 (RGFFKDLEQELHQHQERRQQAALTEH) adopt a coiled-coil conformation. The tract at residues 252 to 323 (DCSPAVTEEP…TKSTNKRGTK (72 aa)) is disordered. Residues 269 to 290 (ATSSTQMASSSKKQVPRNQKGS) show a composition bias toward polar residues. The segment covering 297–310 (ALAATASKTSLAAA) has biased composition (low complexity). S303 is subject to Phosphoserine.

The protein resides in the cell projection. It is found in the cilium. The protein localises to the flagellum. Required for normal spermatogenesis and male fertility. Plays an important role in sperm flagellum biogenesis. This Rattus norvegicus (Rat) protein is Leucine-rich repeat-containing protein 46 (Lrrc46).